The primary structure comprises 150 residues: S-protein homolog 28 (150 aa).

N-linked (GlcNAc...) asparagine glycosylation is present at Asn-122.

This sequence belongs to the plant self-incompatibility (S1) protein family.

The protein resides in the secreted. The sequence is that of S-protein homolog 28 from Arabidopsis thaliana (Mouse-ear cress).